The following is a 490-amino-acid chain: MHHCKRYRSPEPDPYLSYRWKRRRSYSREHEGRLRYPSRREPPPRRSRSRSHDRIPYQRRYREHRDSDTYRCEERSPSFGEDCYGSSRSRHRRRSRERAPYRTRKHAHHCHKRRTRSCSSASSRSQQSSKRSSRSVEDDKEGHLVCRIGDWLQERYEIVGNLGEGTFGKVVECLDHARGKSQVALKIIRNVGKYREAARLEINVLKKIKEKDKENKFLCVLMSDWFNFHGHMCIAFELLGKNTFEFLKENNFQPYPLPHVRHMAYQLCHALRFLHENQLTHTDLKPENILFVNSEFETLYNEHKSCEEKSVKNTSIRVADFGSATFDHEHHTTIVATRHYRPPEVILELGWAQPCDVWSIGCILFEYYRGFTLFQTHENREHLVMMEKILGPIPSHMIHRTRKQKYFYKGGLVWDENSSDGRYVKENCKPLKSYMLQDSLEHVQLFDLMRRMLEFDPAQRITLAEALLHPFFAGLTPEERSFHSSRNPSR.

Residues Met-1–Asp-138 form a disordered region. The residue at position 7 (Tyr-7) is a Phosphotyrosine. Ser-9, Ser-49, Ser-51, Ser-67, Ser-76, and Ser-78 each carry phosphoserine. Composition is skewed to basic and acidic residues over residues Tyr-26–Pro-56 and Glu-63–Ser-76. Positions Arg-88–Arg-116 are enriched in basic residues. Over residues Ser-117–Lys-130 the composition is skewed to low complexity. Residue Ser-135 is modified to Phosphoserine. In terms of domain architecture, Protein kinase spans Tyr-156–Phe-472. ATP-binding positions include Leu-162–Val-170 and Lys-186. Asp-283 acts as the Proton acceptor in catalysis.

Belongs to the protein kinase superfamily. CMGC Ser/Thr protein kinase family. Lammer subfamily. Post-translationally, autophosphorylates on all three types of residues. In terms of tissue distribution, present at high levels in testis and ovary. In testis, expression is restricted to elongated, maturing spermatozoa. Also present in spleen, brain, lung and liver (at protein level).

The protein localises to the nucleus. The protein resides in the cytoplasm. It localises to the cytoplasmic vesicle. It is found in the secretory vesicle. Its subcellular location is the acrosome. The catalysed reaction is L-seryl-[protein] + ATP = O-phospho-L-seryl-[protein] + ADP + H(+). It catalyses the reaction L-threonyl-[protein] + ATP = O-phospho-L-threonyl-[protein] + ADP + H(+). The enzyme catalyses L-tyrosyl-[protein] + ATP = O-phospho-L-tyrosyl-[protein] + ADP + H(+). With respect to regulation, leucettine L41 inhibits its kinase activity and affects the regulation of alternative splicing mediated by phosphorylation of SR proteins. Dual specificity kinase acting on both serine/threonine and tyrosine-containing substrates. Phosphorylates serine- and arginine-rich (SR) proteins of the spliceosomal complex. May be a constituent of a network of regulatory mechanisms that enable SR proteins to control RNA splicing and can cause redistribution of SR proteins from speckles to a diffuse nucleoplasmic distribution. Phosphorylates SRSF1 and SRSF3. Regulates the alternative splicing of tissue factor (F3) pre-mRNA in endothelial cells. The sequence is that of Dual specificity protein kinase CLK3 from Mus musculus (Mouse).